We begin with the raw amino-acid sequence, 604 residues long: UvrABC system protein C (604 aa).

The 80-residue stretch at 13–92 (ASPGVYLMKD…IKKYHPKYNV (80 aa)) folds into the GIY-YIG domain. In terms of domain architecture, UVR spans 205–240 (SEIVQDLEKSIEKASKEQKFEQAGMYYRTLKLIQQA).

It belongs to the UvrC family. As to quaternary structure, interacts with UvrB in an incision complex.

The protein resides in the cytoplasm. Its function is as follows. The UvrABC repair system catalyzes the recognition and processing of DNA lesions. UvrC both incises the 5' and 3' sides of the lesion. The N-terminal half is responsible for the 3' incision and the C-terminal half is responsible for the 5' incision. This chain is UvrABC system protein C, found in Chlamydia abortus (strain DSM 27085 / S26/3) (Chlamydophila abortus).